Consider the following 519-residue polypeptide: Cytochrome P450 709B1 (519 aa).

Residues 1–21 (MGLVIFLALIVLILIIGLRIF) traverse the membrane as a helical segment. A heme-binding site is contributed by Cys-464.

It belongs to the cytochrome P450 family. Requires heme as cofactor. Highly expressed in siliques.

The protein resides in the membrane. Its function is as follows. Involved in stress response. Does not function as cytokinin hydroxylase in yeast heterologous system. This chain is Cytochrome P450 709B1, found in Arabidopsis thaliana (Mouse-ear cress).